The following is a 111-amino-acid chain: MTRRFKVKMNQPRFYFLSLQSYVLVNWQYAICDSQDSNYKQVGGLACIYMRETLFGIHNLSVASPFMIGSLQPLVPWLIRQKWHKIDEPRQLPSTHHALPEGRWRSLTVSL.

This is an uncharacterized protein from Schizosaccharomyces pombe (strain 972 / ATCC 24843) (Fission yeast).